The chain runs to 146 residues: Large ribosomal subunit protein uL15 (146 aa).

The span at 1 to 13 shows a compositional bias: basic and acidic residues; it reads MKLHELKPAEGSR. The tract at residues 1-56 is disordered; sequence MKLHELKPAEGSRKVRNRVGRGAATGNGKTSGRGQKGQKARSGGSVRPGFEGGQLP. A compositionally biased stretch (gly residues) spans 23–35; it reads AATGNGKTSGRGQ.

It belongs to the universal ribosomal protein uL15 family. Part of the 50S ribosomal subunit.

In terms of biological role, binds to the 23S rRNA. The chain is Large ribosomal subunit protein uL15 from Staphylococcus saprophyticus subsp. saprophyticus (strain ATCC 15305 / DSM 20229 / NCIMB 8711 / NCTC 7292 / S-41).